Reading from the N-terminus, the 68-residue chain is Negative regulator of P-body association (68 aa).

The disordered stretch occupies residues 1-68 (MGDQPCASGR…LKSHPPPPEK (68 aa)).

In terms of assembly, interacts with mRNA decapping proteins DCP1A, DCP2 and EDC4.

It localises to the cytoplasm. Its subcellular location is the P-body. Promotes dispersal of P-body components and is likely to play a role in the mRNA decapping process. The protein is Negative regulator of P-body association of Homo sapiens (Human).